Consider the following 66-residue polypeptide: MPKQKTHRASAKRFKRTGSGGLKRFRAFTSHRFHGKTKKQRRHLRKATMVSSGDFKRIKAMLTRLK.

Residues 1–16 (MPKQKTHRASAKRFKR) are compositionally biased toward basic residues. Positions 1-21 (MPKQKTHRASAKRFKRTGSGG) are disordered.

The protein belongs to the bacterial ribosomal protein bL35 family.

The protein is Large ribosomal subunit protein bL35 of Streptococcus agalactiae serotype Ia (strain ATCC 27591 / A909 / CDC SS700).